The chain runs to 141 residues: Ribonuclease VapC2 (141 aa).

In terms of domain architecture, PINc spans L7–Q129. Positions 99, 117, and 119 each coordinate Mg(2+).

Belongs to the PINc/VapC protein family. As to quaternary structure, probably active as a homodimer. The cofactor is Mg(2+).

Its function is as follows. Toxic component of a type II toxin-antitoxin (TA) system. Acts as an RNase. All its toxic effects are neutralized by coexpression with cognate antitoxin VapB2. This is Ribonuclease VapC2 from Mycobacterium tuberculosis (strain CDC 1551 / Oshkosh).